The sequence spans 138 residues: Transcription antitermination protein NusB (138 aa).

It belongs to the NusB family.

Involved in transcription antitermination. Required for transcription of ribosomal RNA (rRNA) genes. Binds specifically to the boxA antiterminator sequence of the ribosomal RNA (rrn) operons. The sequence is that of Transcription antitermination protein NusB from Desulforudis audaxviator (strain MP104C).